A 203-amino-acid chain; its full sequence is Outer-membrane lipoprotein LolB (203 aa).

Positions 1–21 (MRLSASLFHIALVTVLLVLAG) are cleaved as a signal peptide. C22 carries N-palmitoyl cysteine lipidation. C22 carries S-diacylglycerol cysteine lipidation.

The protein belongs to the LolB family. In terms of assembly, monomer.

It localises to the cell outer membrane. Functionally, plays a critical role in the incorporation of lipoproteins in the outer membrane after they are released by the LolA protein. This is Outer-membrane lipoprotein LolB from Shewanella frigidimarina (strain NCIMB 400).